The primary structure comprises 1851 residues: Chitin synthase (1851 aa).

The tract at residues 1–21 (MQYHQHQHQFPGPGPSHTSVY) is disordered. The Cytoplasmic segment spans residues 1-108 (MQYHQHQHQF…KDTLYNGFLQ (108 aa)). A helical transmembrane segment spans residues 109–129 (VLKMITFVALFVTTLGSSILA). At 130–168 (KLSLLVMAAGLGQAGHNISICPDKIPESPKNSVLISPKN) the chain is on the extracellular side. An N-linked (GlcNAc...) asparagine glycan is attached at N146. The helical transmembrane segment at 169–189 (AAKWAWALLLAICIPELLCFA) threads the bilayer. Residues 190–208 (RSLHRSLFRKVRGPSFLQF) are Cytoplasmic-facing. A helical membrane pass occupies residues 209–229 (LLVFTVESVHAFGLGALVFAI). The Extracellular portion of the chain corresponds to 230-234 (MPRGM). Residues 235 to 255 (VITMLQLGNSLCLIPSLLLPL) form a helical membrane-spanning segment. Topologically, residues 256-261 (SRSRSR) are cytoplasmic. Residues 262-282 (WLPLLLLLDGSAILAQSSAAI) form a helical membrane-spanning segment. Topologically, residues 283–291 (WRGSIPLER) are extracellular. A helical membrane pass occupies residues 292-312 (FGFVFLCTSLISIAWWQNFVH). The Cytoplasmic portion of the chain corresponds to 313–337 (PHSFLPATRFFAHYAAKLRECRSKT). Residues 338–358 (FVVLSPWKCLIFTFCMFQFVP) form a helical membrane-spanning segment. Over 359–544 (PQIPFRELLQ…ELNQFTTAND (186 aa)) the chain is Extracellular. Residues N385 and N435 are each glycosylated (N-linked (GlcNAc...) asparagine). Residues 432–522 (LFRNGTRRPP…DADEQEEEEE (91 aa)) form a disordered region. Basic and acidic residues predominate over residues 442-454 (KKEEVKKNKMDSK). Residues 455-465 (KKTKKLKKKKG) are compositionally biased toward basic residues. The segment covering 466-478 (GNNNATSTNSSEK) has biased composition (low complexity). N-linked (GlcNAc...) asparagine glycosylation is found at N469 and N474. Residues 513–522 (DADEQEEEEE) are compositionally biased toward acidic residues. Residues 545-565 (ALWLVFVQAGSVLLCQLCAKF) traverse the membrane as a helical segment. Topologically, residues 566-573 (ACKVVMQR) are cytoplasmic. Residues 574 to 594 (VGLALPVVLSIPFGILFLAYS) form a helical membrane-spanning segment. At 595-631 (CRQKATNPCHLSEWMSKELFWQCPTRPFHWQRFFREQ) the chain is on the extracellular side. A helical membrane pass occupies residues 632–652 (PNLLWLCWWLSQCWITIHLWL). At 653 to 1124 (PRQERLAKSE…VSIWYIAYQL (472 aa)) the chain is on the cytoplasmic side. Positions 693-718 (SEDIDTEEEANEGGGEQEDGNSSTHT) are disordered. The segment covering 696 to 711 (IDTEEEANEGGGEQED) has biased composition (acidic residues). Residues 1125 to 1145 (VMLFSSVLGPGTIFLMIVGAI) traverse the membrane as a helical segment. Over 1146–1154 (SISFNIDTR) the chain is Extracellular. A helical transmembrane segment spans residues 1155–1175 (LALLIVTTPVLCFCVCCLTCG). Residues 1176–1179 (TETQ) lie on the Cytoplasmic side of the membrane. The chain crosses the membrane as a helical span at residues 1180–1200 (LLLAQVIGALFAMLMTAVIVG). The Extracellular segment spans residues 1201–1209 (TSLQIQKDG). A helical membrane pass occupies residues 1210–1230 (LLSPHSIFLFTVLGSWSFSAL). The Cytoplasmic segment spans residues 1231 to 1235 (LHPLE). A helical transmembrane segment spans residues 1236–1256 (FGCLLPCGLYFLAIPCMYMLL). Residues 1257–1461 (PVYSLCNLNT…QRGLNELRNT (205 aa)) are Extracellular-facing. N1274 is a glycosylation site (N-linked (GlcNAc...) asparagine). The stretch at 1329–1383 (CADETVEVRKLDENFRKIERKLQSLERRTNGQGNNAEEEGKEEEETGKSEQERKE) forms a coiled coil. The interval 1350–1402 (LQSLERRTNGQGNNAEEEGKEEEETGKSEQERKEGREEGKEEEGKMSKRKKEE) is disordered. Positions 1364–1373 (AEEEGKEEEE) are enriched in acidic residues. A compositionally biased stretch (basic and acidic residues) spans 1374-1402 (TGKSEQERKEGREEGKEEEGKMSKRKKEE). A helical membrane pass occupies residues 1462-1482 (CCSAFFMVNIVFIIVVLVLQL). The Cytoplasmic segment spans residues 1483–1527 (QKDCLHIEWPLGPLVNQTRVQCGGGGGRDFEGEEWIMSRLQLEPM). A helical membrane pass occupies residues 1528–1548 (GFVFIVFFLIILFIQFLAMLF). At 1549–1851 (HRFGTFTHII…FLGTTNKRAK (303 aa)) the chain is on the extracellular side. Residues 1626–1658 (GKRQQNAQIPPRCEKGGNERGEESPTSLPAPPV) are disordered. The span at 1637 to 1648 (RCEKGGNERGEE) shows a compositional bias: basic and acidic residues. N1660 carries an N-linked (GlcNAc...) asparagine glycan. A disordered region spans residues 1765–1851 (HSIFPSSSES…FLGTTNKRAK (87 aa)). Over residues 1781–1822 (GGGRGRGREQERDKCLEGKKEKFRQRVEEGPARCHRLEELFG) the composition is skewed to basic and acidic residues. Residues 1823 to 1834 (KSRKGGPQKRGK) are compositionally biased toward basic residues.

This sequence belongs to the chitin synthase family. Class IV subfamily. Post-translationally, may require proteolytic cleavage for activation.

It localises to the cell membrane. The catalysed reaction is [(1-&gt;4)-N-acetyl-beta-D-glucosaminyl](n) + UDP-N-acetyl-alpha-D-glucosamine = [(1-&gt;4)-N-acetyl-beta-D-glucosaminyl](n+1) + UDP + H(+). Functionally, required for the synthesis of chitin. The polypeptide is Chitin synthase (Meloidogyne artiellia (British root-knot nematode)).